Reading from the N-terminus, the 597-residue chain is Exochitinase 1 (597 aa).

A signal peptide (or 32) is located at residues 1–29 (MDRFRPLAVLIAAALTLSGTTALSSAARA). The Fibronectin type-III domain maps to 172-253 (PPTGLRTGSV…ATVTATTAPG (82 aa)). A GH18 domain is found at 264–597 (HALVGYLHAS…FQRTFDGYFG (334 aa)). The active-site Proton donor is the E384.

The protein belongs to the glycosyl hydrolase 18 family. Chitinase class II subfamily. In terms of processing, the N-terminus is blocked.

The enzyme catalyses Random endo-hydrolysis of N-acetyl-beta-D-glucosaminide (1-&gt;4)-beta-linkages in chitin and chitodextrins.. Its activity is regulated as follows. Inhibited by the pseudosugar allosamidin A. Exochitinase that generates exclusively chitobiose from chitotetraose, chitohexaose, and colloidal high-molecular mass chitin. The sequence is that of Exochitinase 1 (chi01) from Streptomyces olivaceoviridis (Streptomyces corchorusii).